Consider the following 515-residue polypeptide: Mucin-like protein Glc1.8a (515 aa).

The first 20 residues, 1–20 (MSQITLIILILAIGFSCTKS), serve as a signal peptide directing secretion. Residues 21 to 467 (HPINSTRDGE…ANDIKKPAFP (447 aa)) lie on the Extracellular side of the membrane. Residues N24, N45, N51, N60, N85, N93, N102, N123, N129, N138, N180, N201, N207, N216, N258, N279, N285, N319, N327, N336, N357, N363, N372, N397, N405, N413, N434, and N441 are each glycosylated (N-linked (GlcNAc...) asparagine; by host). Residues 80 to 114 (SKKDENITGQSEINTSAKSQPINSTRDGEDSGTDL) form a disordered region. The span at 86 to 104 (ITGQSEINTSAKSQPINST) shows a compositional bias: polar residues. Positions 314–358 (SKKDENVTGQSEINTSAKSQPINSTRDGEDSGTDLKNLLTDPANT) are disordered. Residues 320-338 (VTGQSEINTSAKSQPINST) are compositionally biased toward polar residues. The tract at residues 393–413 (RKDENVTGQSEFNISTNSNLN) is disordered. Residues 468–488 (YCIILITFQIVTVGMIIYLVF) traverse the membrane as a helical segment. The Cytoplasmic segment spans residues 489-515 (RTMRKPCQSERAIPLNTFGFGNNSSHE).

Belongs to the polydnaviridae Glc1.8 protein family.

The protein resides in the host membrane. Its function is as follows. Involved in suppression of the insect cellular immune response. Inhibits host hemocyte adhesion and phagocytosis. This Microplitis demolitor (Parasitoid wasp) protein is Mucin-like protein Glc1.8a (O9).